Consider the following 161-residue polypeptide: Allophycocyanin alpha-B chain (161 aa).

Asparagine 71 is modified (N4-methylasparagine). Cysteine 81 contributes to the (2R,3E)-phycocyanobilin binding site.

The protein belongs to the phycobiliprotein family. In terms of processing, contains one covalently linked bilin chromophore.

The protein resides in the plastid. It localises to the chloroplast thylakoid membrane. Functionally, allophycocyanin is a photosynthetic bile pigment-protein complex with maximum absorption at approximately 650 nanometers. The sequence is that of Allophycocyanin alpha-B chain (apcD) from Pyropia yezoensis (Susabi-nori).